We begin with the raw amino-acid sequence, 207 residues long: Large ribosomal subunit protein uL3 (207 aa).

Belongs to the universal ribosomal protein uL3 family. As to quaternary structure, part of the 50S ribosomal subunit. Forms a cluster with proteins L14 and L19.

One of the primary rRNA binding proteins, it binds directly near the 3'-end of the 23S rRNA, where it nucleates assembly of the 50S subunit. The sequence is that of Large ribosomal subunit protein uL3 from Fervidobacterium nodosum (strain ATCC 35602 / DSM 5306 / Rt17-B1).